Reading from the N-terminus, the 290-residue chain is Uridine diphosphate glucose pyrophosphatase NUDT22 (290 aa).

7 residues coordinate substrate: Phe-56, Tyr-87, Arg-139, Ala-144, Asp-151, His-156, and Glu-158. Residues 118–285 form the Nudix hydrolase domain; sequence ADPLGVGAAL…KGAIFLYNRV (168 aa). A Nudix box motif is present at residues 175–196; it reads GELVVHELFSSVLQEICDEVNV. The Mg(2+) site is built by Glu-189 and Glu-193. A substrate-binding site is contributed by Ser-274.

The protein belongs to the Nudix family. It depends on Mg(2+) as a cofactor.

It carries out the reaction UDP-sugar + H2O = UMP + alpha-D-aldose 1-phosphate.. Hydrolyzes UDP-glucose to glucose 1-phosphate and UMP and UDP-galactose to galactose 1-phosphate and UMP. Preferred substrate is UDP-glucose. The chain is Uridine diphosphate glucose pyrophosphatase NUDT22 (NUDT22) from Bos taurus (Bovine).